A 561-amino-acid chain; its full sequence is Trehalose-6-phosphate hydrolase (561 aa).

Aspartate 203 serves as the catalytic Nucleophile. Catalysis depends on glutamate 254, which acts as the Proton donor.

The protein belongs to the glycosyl hydrolase 13 family.

The protein localises to the cytoplasm. The enzyme catalyses alpha,alpha-trehalose 6-phosphate + H2O = D-glucose 6-phosphate + D-glucose. Activity is stimulated by high salt concentrations with different efficiencies depending on the kind of salt. In vitro, inhibited by glucose. Functionally, hydrolyzes trehalose-6-phosphate to glucose and glucose 6-phosphate. Can also very effectively hydrolyze p-nitrophenyl-alpha-D-glucopyranoside, but not lactose, maltose, sucrose or sucrose-6-phosphate. Trehalose is also hydrolyzed, but to a much smaller extent than trehalose-6-phosphate. In Bacillus subtilis (strain 168), this protein is Trehalose-6-phosphate hydrolase.